A 317-amino-acid chain; its full sequence is Ferrochelatase (317 aa).

Residues His187 and Glu268 each contribute to the Fe cation site.

It belongs to the ferrochelatase family.

Its subcellular location is the cytoplasm. It catalyses the reaction heme b + 2 H(+) = protoporphyrin IX + Fe(2+). It participates in porphyrin-containing compound metabolism; protoheme biosynthesis; protoheme from protoporphyrin-IX: step 1/1. In terms of biological role, catalyzes the ferrous insertion into protoporphyrin IX. The chain is Ferrochelatase from Campylobacter concisus (strain 13826).